The chain runs to 249 residues: DNA repair protein RecO (249 aa).

Belongs to the RecO family.

Its function is as follows. Involved in DNA repair and RecF pathway recombination. This Afipia carboxidovorans (strain ATCC 49405 / DSM 1227 / KCTC 32145 / OM5) (Oligotropha carboxidovorans) protein is DNA repair protein RecO.